Here is a 196-residue protein sequence, read N- to C-terminus: SAGA-associated factor 11 homolog (196 aa).

The SGF11-type zinc finger occupies 102–123 (CTCPNCDRLVAAARFAPHLEKC). Residues 140-196 (TKEGTSASSNSSYVHSGANAGGTDDEDDVDWSSDKRKKKSTQNSRNNGSKKNNGKTF) are disordered. Polar residues predominate over residues 142–153 (EGTSASSNSSYV). The residue at position 172 (Ser172) is a Phosphoserine. Positions 182-196 (NSRNNGSKKNNGKTF) are enriched in low complexity.

The protein belongs to the SGF11 family. In terms of assembly, component of some SAGA transcription coactivator-HAT complexes, at least composed of Ada2b, not/nonstop, Pcaf/Gcn5, Sgf11 and Spt3. Within the SAGA complex, Sgf11, e(y)2, and not/nonstop form an additional subcomplex of SAGA called the DUB module (deubiquitination module). Interacts directly with not/nonstop. Interacts with the AMEX complex component xmas-2. Interacts with Cbp80; important for promoter recruitment of Sgf11 that is not associated with the DUB module.

It is found in the nucleus. The protein resides in the nucleoplasm. Its subcellular location is the cytoplasm. Its function is as follows. Component of the transcription regulatory histone acetylation (HAT) complex SAGA, a multiprotein complex that activates transcription by remodeling chromatin and mediating histone acetylation and deubiquitination. Within the SAGA complex, participates in a subcomplex that specifically deubiquitinates histone H2B. The SAGA complex is recruited to specific gene promoters by activators, where it is required for transcription. Required for nuclear receptor-mediated transactivation. Binds independently on SAGA to promoters in an RNA-dependent manner. Binds to mRNA and is essential for total mRNA export from the nucleus. Required to counteract heterochromatin silencing. Controls the development of neuronal connectivity in visual system by being required for accurate axon targeting in the optic lobe. Required for expression of ecdysone-induced genes such as br/broad. This Drosophila persimilis (Fruit fly) protein is SAGA-associated factor 11 homolog.